A 355-amino-acid polypeptide reads, in one-letter code: NADH-quinone oxidoreductase subunit H (355 aa).

A run of 8 helical transmembrane segments spans residues 25-45 (IVRILVVSVVILLCVAYLILW), 91-111 (WLYLIAPVMTVVPAFAVWAVI), 126-146 (LLYAMAISSIGVYAVILAGWA), 170-190 (MGFALVLVLMTAGSLNLSEIV), 205-225 (FLSWNWLPLLPAFVVYFISGI), 252-272 (GMAFALFFLAEYINMIVISAL), 290-310 (FIPGIFWLVLKIFALLSVFIW), and 330-350 (VFLPVTVVWVVVVGFWMMSPL).

It belongs to the complex I subunit 1 family. In terms of assembly, NDH-1 is composed of 14 different subunits. Subunits NuoA, H, J, K, L, M, N constitute the membrane sector of the complex.

The protein resides in the cell inner membrane. The catalysed reaction is a quinone + NADH + 5 H(+)(in) = a quinol + NAD(+) + 4 H(+)(out). In terms of biological role, NDH-1 shuttles electrons from NADH, via FMN and iron-sulfur (Fe-S) centers, to quinones in the respiratory chain. The immediate electron acceptor for the enzyme in this species is believed to be ubiquinone. Couples the redox reaction to proton translocation (for every two electrons transferred, four hydrogen ions are translocated across the cytoplasmic membrane), and thus conserves the redox energy in a proton gradient. This subunit may bind ubiquinone. The chain is NADH-quinone oxidoreductase subunit H from Burkholderia lata (strain ATCC 17760 / DSM 23089 / LMG 22485 / NCIMB 9086 / R18194 / 383).